Reading from the N-terminus, the 177-residue chain is Large ribosomal subunit protein uL5 (177 aa).

The protein belongs to the universal ribosomal protein uL5 family. In terms of assembly, part of the 50S ribosomal subunit. Interacts with protein L18 and the 5S rRNA, and probably with tRNAs. Forms a bridge to the 30S subunit in the 70S ribosome.

In terms of biological role, this is 1 of 5 proteins that mediates the attachment of the 5S rRNA onto the large ribosomal subunit, stabilizing the orientation of adjacent RNA domains. Forms part of the central protuberance. Modeling places the A and P site tRNAs in close proximity to this protein; the 5S rRNA and some of its associated proteins might help stabilize positioning of ribosome-bound tRNAs. In the 70S ribosome it is thought to contact protein S13 of the 30S subunit (bridge B1b), connecting the 2 subunits; this bridge is implicated in subunit movement. In Haloarcula marismortui (strain ATCC 43049 / DSM 3752 / JCM 8966 / VKM B-1809) (Halobacterium marismortui), this protein is Large ribosomal subunit protein uL5 (rpl5).